We begin with the raw amino-acid sequence, 644 residues long: MNVSIEGQMLEVASGASCGDALKGALSGKKFKNVLACRLDGGLVDITATVPDGTTTIEPVYADSPEGLDLIRHSTAHIMACAVKRLFPAAKVTIGPSIDNGFYYDFDAERPFSPEDFEAIEREMQKIVDAATPFERSEMPRDEAVALFEGMGETYKVEIIRDLPNDTVSLYRCGEFVDLCRGPHIPHAGFAKAFKLMSVAGAYWRGDEKNPMLSRIYGTAFADAKTLKEHLHRIEEAKRRDHRKLGQQLDLFAFHEDVAPGMVFWHPKGMLVRTIIEDFLRKEHLKRRYDIVQGPQLLRRELWEKSGHYDNYRENMYFTEIDENAYGVKPMNCLAHMLIYRSAIRSYRDLPKRFFELGVVHRHEKSGVLHGLLRVRQFTQDDAHIICRPDQLEDEIIDVIALVRDLMNLFGFDYKVAVSTRPEKSIGSDEAWELATNALVKAVERAGIPYTINEGDGAFYGPKIDVRLMDCIGREWQCSTIQCDFTLPERFDLVYVGQDGERHRPVMVHRAILGSLERFIGVLIEQYAGAFPAWLAPVQARLLTVTDAQNEFVESARAALAKAGIRVEADVRNEKLGYKVREAQLEKIPYILVVGDKEVEAGGVNVRLRTGENLGLKSLDEVVSLLESDCQEPFKRGGMSYSFS.

One can recognise a TGS domain in the interval 1-61 (MNVSIEGQML…DGTTTIEPVY (61 aa)). The tract at residues 241 to 532 (DHRKLGQQLD…LIEQYAGAFP (292 aa)) is catalytic. The Zn(2+) site is built by cysteine 333, histidine 384, and histidine 509.

It belongs to the class-II aminoacyl-tRNA synthetase family. As to quaternary structure, homodimer. Zn(2+) serves as cofactor.

It localises to the cytoplasm. The enzyme catalyses tRNA(Thr) + L-threonine + ATP = L-threonyl-tRNA(Thr) + AMP + diphosphate + H(+). Catalyzes the attachment of threonine to tRNA(Thr) in a two-step reaction: L-threonine is first activated by ATP to form Thr-AMP and then transferred to the acceptor end of tRNA(Thr). Also edits incorrectly charged L-seryl-tRNA(Thr). The polypeptide is Threonine--tRNA ligase (Nitratidesulfovibrio vulgaris (strain ATCC 29579 / DSM 644 / CCUG 34227 / NCIMB 8303 / VKM B-1760 / Hildenborough) (Desulfovibrio vulgaris)).